Reading from the N-terminus, the 776-residue chain is DNA ligase (776 aa).

Residues 31–35, 80–81, and Glu-112 each bind NAD(+); these read DAEYD and SL. Lys-114 serves as the catalytic N6-AMP-lysine intermediate. Residues Arg-135, Glu-172, Lys-288, and Lys-312 each coordinate NAD(+). Positions 406, 409, 436, and 442 each coordinate Zn(2+). Residues 693-776 form the BRCT domain; the sequence is AEGLPLAGQT…VFLDEQGIAI (84 aa).

It belongs to the NAD-dependent DNA ligase family. LigA subfamily. Requires Mg(2+) as cofactor. Mn(2+) is required as a cofactor.

The catalysed reaction is NAD(+) + (deoxyribonucleotide)n-3'-hydroxyl + 5'-phospho-(deoxyribonucleotide)m = (deoxyribonucleotide)n+m + AMP + beta-nicotinamide D-nucleotide.. In terms of biological role, DNA ligase that catalyzes the formation of phosphodiester linkages between 5'-phosphoryl and 3'-hydroxyl groups in double-stranded DNA using NAD as a coenzyme and as the energy source for the reaction. It is essential for DNA replication and repair of damaged DNA. This Pseudomonas putida (strain W619) protein is DNA ligase.